Here is a 512-residue protein sequence, read N- to C-terminus: Histidine ammonia-lyase (512 aa).

The 5-imidazolinone (Cys-Gly) cross-link spans 143-145 (CSG). Ser-144 is subject to 2,3-didehydroalanine (Ser).

The protein belongs to the PAL/histidase family. In terms of processing, contains an active site 4-methylidene-imidazol-5-one (MIO), which is formed autocatalytically by cyclization and dehydration of residues Cys-Ser-Gly.

Its subcellular location is the cytoplasm. The enzyme catalyses L-histidine = trans-urocanate + NH4(+). Its pathway is amino-acid degradation; L-histidine degradation into L-glutamate; N-formimidoyl-L-glutamate from L-histidine: step 1/3. The sequence is that of Histidine ammonia-lyase from Streptomyces avermitilis (strain ATCC 31267 / DSM 46492 / JCM 5070 / NBRC 14893 / NCIMB 12804 / NRRL 8165 / MA-4680).